Here is a 328-residue protein sequence, read N- to C-terminus: scyllo-inositol 2-dehydrogenase (NADP(+)) IolU (328 aa).

Belongs to the Gfo/Idh/MocA family.

It carries out the reaction scyllo-inositol + NADP(+) = scyllo-inosose + NADPH + H(+). Its function is as follows. Catalyzes the NADPH-dependent reduction of scyllo-inosose (SIS) to scyllo-inositol (SI) in vitro, but is unable to dehydrogenate scyllo-inositol and myo-inositol. Is less efficient than the functional paralog IolW. Under physiological conditions, may primarily function as an NADPH-dependent oxidoreductase that reduces carbonyl group(s) in its substrates. Cannot use NADH instead of NADPH. This Bacillus subtilis (strain 168) protein is scyllo-inositol 2-dehydrogenase (NADP(+)) IolU.